Consider the following 129-residue polypeptide: Large ribosomal subunit protein bL32m (129 aa).

The N-terminal 63 residues, 1-63 (MAAMTAAAAA…LEDIWEGILR (63 aa)), are a transit peptide targeting the mitochondrion. Residues C94, C97, C107, and C110 each coordinate Zn(2+).

This sequence belongs to the bacterial ribosomal protein bL32 family. In terms of assembly, component of the mitochondrial large ribosomal subunit (mt-LSU). Mature N.crassa 74S mitochondrial ribosomes consist of a small (37S) and a large (54S) subunit. The 37S small subunit contains a 16S ribosomal RNA (16S mt-rRNA) and 32 different proteins. The 54S large subunit contains a 23S rRNA (23S mt-rRNA) and 42 different proteins. bL32m has a zinc binding site. In terms of processing, MRPL32 precursor is processed by the m-AAA protease (composed of YTA12/RCA1 and YTA10/AFG3), which cleaves the N-terminal transit peptide. Cleavage by the m-AAA protease takes place prior to assembly into the large subunit, an essential step for mitochondrial ribosome (mitoribosome) assembly. Proper processing by the m-AAA protease is dependent on the zinc-binding region within the tightly folded C-terminal domain of MRPL32: zinc-dependent folding halts degradation initiated from the N-terminus and triggers the release of mature MRPL32.

It localises to the mitochondrion. Its function is as follows. Component of the mitochondrial ribosome (mitoribosome), a dedicated translation machinery responsible for the synthesis of mitochondrial genome-encoded proteins, including at least some of the essential transmembrane subunits of the mitochondrial respiratory chain. The mitoribosomes are attached to the mitochondrial inner membrane and translation products are cotranslationally integrated into the membrane. The sequence is that of Large ribosomal subunit protein bL32m (mrpl32) from Neurospora crassa (strain ATCC 24698 / 74-OR23-1A / CBS 708.71 / DSM 1257 / FGSC 987).